A 104-amino-acid polypeptide reads, in one-letter code: Phosphoribosyl-ATP pyrophosphatase (104 aa).

The protein belongs to the PRA-PH family.

Its subcellular location is the cytoplasm. The catalysed reaction is 1-(5-phospho-beta-D-ribosyl)-ATP + H2O = 1-(5-phospho-beta-D-ribosyl)-5'-AMP + diphosphate + H(+). It participates in amino-acid biosynthesis; L-histidine biosynthesis; L-histidine from 5-phospho-alpha-D-ribose 1-diphosphate: step 2/9. This chain is Phosphoribosyl-ATP pyrophosphatase, found in Allorhizobium ampelinum (strain ATCC BAA-846 / DSM 112012 / S4) (Agrobacterium vitis (strain S4)).